The following is a 48-amino-acid chain: uncharacterized protein (48 aa).

A helical membrane pass occupies residues 21–43 (SIFVSLGVFAVSVAILKSRLGNF).

It is found in the membrane. This is an uncharacterized protein from Schizosaccharomyces pombe (strain 972 / ATCC 24843) (Fission yeast).